Reading from the N-terminus, the 133-residue chain is Ribosome-binding factor A (133 aa).

It belongs to the RbfA family. Monomer. Binds 30S ribosomal subunits, but not 50S ribosomal subunits or 70S ribosomes.

The protein localises to the cytoplasm. In terms of biological role, one of several proteins that assist in the late maturation steps of the functional core of the 30S ribosomal subunit. Associates with free 30S ribosomal subunits (but not with 30S subunits that are part of 70S ribosomes or polysomes). Required for efficient processing of 16S rRNA. May interact with the 5'-terminal helix region of 16S rRNA. The polypeptide is Ribosome-binding factor A (Cronobacter sakazakii (strain ATCC BAA-894) (Enterobacter sakazakii)).